The following is a 393-amino-acid chain: NAD(P)H-quinone oxidoreductase subunit H, chloroplastic (393 aa).

The protein belongs to the complex I 49 kDa subunit family. In terms of assembly, NDH is composed of at least 16 different subunits, 5 of which are encoded in the nucleus.

It is found in the plastid. The protein localises to the chloroplast thylakoid membrane. It catalyses the reaction a plastoquinone + NADH + (n+1) H(+)(in) = a plastoquinol + NAD(+) + n H(+)(out). The enzyme catalyses a plastoquinone + NADPH + (n+1) H(+)(in) = a plastoquinol + NADP(+) + n H(+)(out). In terms of biological role, NDH shuttles electrons from NAD(P)H:plastoquinone, via FMN and iron-sulfur (Fe-S) centers, to quinones in the photosynthetic chain and possibly in a chloroplast respiratory chain. The immediate electron acceptor for the enzyme in this species is believed to be plastoquinone. Couples the redox reaction to proton translocation, and thus conserves the redox energy in a proton gradient. This Lolium perenne (Perennial ryegrass) protein is NAD(P)H-quinone oxidoreductase subunit H, chloroplastic.